Consider the following 498-residue polypeptide: Lysine--tRNA ligase (498 aa).

Mg(2+) contacts are provided by E411 and E418.

The protein belongs to the class-II aminoacyl-tRNA synthetase family. As to quaternary structure, homodimer. Mg(2+) is required as a cofactor.

It is found in the cytoplasm. The enzyme catalyses tRNA(Lys) + L-lysine + ATP = L-lysyl-tRNA(Lys) + AMP + diphosphate. The chain is Lysine--tRNA ligase from Enterococcus faecalis (strain ATCC 700802 / V583).